Here is a 336-residue protein sequence, read N- to C-terminus: tRNA-cytidine(32) 2-sulfurtransferase (336 aa).

Over residues 11 to 23 (TAAAPAGTGEATP) the composition is skewed to low complexity. Residues 11-31 (TAAAPAGTGEATPVHARARSP) form a disordered region. The PP-loop motif signature appears at 75 to 80 (SGGKDS). Residues Cys150, Cys153, and Cys241 each contribute to the [4Fe-4S] cluster site.

This sequence belongs to the TtcA family. Homodimer. Mg(2+) serves as cofactor. The cofactor is [4Fe-4S] cluster.

The protein resides in the cytoplasm. It carries out the reaction cytidine(32) in tRNA + S-sulfanyl-L-cysteinyl-[cysteine desulfurase] + AH2 + ATP = 2-thiocytidine(32) in tRNA + L-cysteinyl-[cysteine desulfurase] + A + AMP + diphosphate + H(+). It functions in the pathway tRNA modification. Its function is as follows. Catalyzes the ATP-dependent 2-thiolation of cytidine in position 32 of tRNA, to form 2-thiocytidine (s(2)C32). The sulfur atoms are provided by the cysteine/cysteine desulfurase (IscS) system. This is tRNA-cytidine(32) 2-sulfurtransferase from Paraburkholderia xenovorans (strain LB400).